Reading from the N-terminus, the 393-residue chain is Probable acetyl-CoA acyltransferase (393 aa).

The Acyl-thioester intermediate role is filled by cysteine 88. Residues histidine 349 and cysteine 378 each act as proton acceptor in the active site.

This sequence belongs to the thiolase-like superfamily. Thiolase family.

Its subcellular location is the cytoplasm. It carries out the reaction 2 acetyl-CoA = acetoacetyl-CoA + CoA. The sequence is that of Probable acetyl-CoA acyltransferase from Staphylococcus aureus (strain MRSA252).